Reading from the N-terminus, the 184-residue chain is LPS-assembly lipoprotein LptE (184 aa).

The signal sequence occupies residues 1–19 (MRHRLFTLVLGLAVLITAG). C20 is lipidated: N-palmitoyl cysteine. Residue C20 is the site of S-diacylglycerol cysteine attachment.

The protein belongs to the LptE lipoprotein family. Component of the lipopolysaccharide transport and assembly complex. Interacts with LptD.

Its subcellular location is the cell outer membrane. In terms of biological role, together with LptD, is involved in the assembly of lipopolysaccharide (LPS) at the surface of the outer membrane. Required for the proper assembly of LptD. Binds LPS and may serve as the LPS recognition site at the outer membrane. This Pectobacterium atrosepticum (strain SCRI 1043 / ATCC BAA-672) (Erwinia carotovora subsp. atroseptica) protein is LPS-assembly lipoprotein LptE.